The chain runs to 596 residues: Adenine deaminase (596 aa).

This sequence belongs to the metallo-dependent hydrolases superfamily. Adenine deaminase family. The cofactor is Mn(2+).

It carries out the reaction adenine + H2O + H(+) = hypoxanthine + NH4(+). The polypeptide is Adenine deaminase (Moorella thermoacetica (strain ATCC 39073 / JCM 9320)).